Consider the following 143-residue polypeptide: 3-dehydroquinate dehydratase (143 aa).

The active-site Proton acceptor is Tyr22. Substrate contacts are provided by Asn73, His79, and Asp86. His99 functions as the Proton donor in the catalytic mechanism. Substrate is bound by residues 100–101 (IS) and Arg110.

This sequence belongs to the type-II 3-dehydroquinase family. In terms of assembly, homododecamer.

It catalyses the reaction 3-dehydroquinate = 3-dehydroshikimate + H2O. The protein operates within metabolic intermediate biosynthesis; chorismate biosynthesis; chorismate from D-erythrose 4-phosphate and phosphoenolpyruvate: step 3/7. Functionally, catalyzes a trans-dehydration via an enolate intermediate. This chain is 3-dehydroquinate dehydratase, found in Salinispora arenicola (strain CNS-205).